The sequence spans 79 residues: Neurotoxin BmK-M9 (79 aa).

Residues 1 to 14 (MISFALLLMTGVES) form the signal peptide. An LCN-type CS-alpha/beta domain is found at 16–78 (RDAYIAKPEN…VPIRVPGKCH (63 aa)). Intrachain disulfides connect C26–C77, C30–C50, C36–C60, and C40–C62. Residue R79 is a propeptide, removed by a carboxypeptidase.

This sequence belongs to the long (4 C-C) scorpion toxin superfamily. Sodium channel inhibitor family. Alpha subfamily. As to expression, expressed by the venom gland.

The protein localises to the secreted. Binds to sodium channels (Nav) and inhibits the inactivation of the activated channels, thereby blocking neuronal transmission. This toxin is active against mammals. The protein is Neurotoxin BmK-M9 of Olivierus martensii (Manchurian scorpion).